Here is a 457-residue protein sequence, read N- to C-terminus: MSKMMMNGSGTNGTAAVANNHKEMHQRCLNPYRSKVTVVLGAQWGDEGKGKVVDMLATEADVVCRCQGGNNAGHTVVVNGKDFDFHLLPSGIINDKCTSIIGNGVVIHLPGLFDELAKNEAKGLTNWESRLVISNRAHLVFDLHQQVDGLQEAEKGGKSLGTTKKGIGPCYSSKATRNGIRVSDLLGDFKVFSEKFESLVNMYKRLFPNFEVDVASELVRYRDYAERLRPLVRDTVSLVHASLKEGKSVLVEGANAAMLDIDFGTYPYVTSSNCSIGGVLTGLGLPPQTIGEVVGVVKAYTTRVGDGPFPTELHDEIGSLLQKRGGEIGVTTKRVRRCGWLDLALLRYTGMVNGYTSICLTKLDILDTLKEIKVAVSYTLRGEKIDYFPGSITDLAQVEVNYITMPGWLKSTENVRDFNELPPEAQDYIRMIENDLGVPVKWIGVGKGRESIINVKE.

Residues 45–51 (GDEGKGK) and 73–75 (GHT) each bind GTP. Catalysis depends on Asp-46, which acts as the Proton acceptor. Asp-46 and Gly-73 together coordinate Mg(2+). IMP is bound by residues 46-49 (DEGK), 71-74 (NAGH), Thr-163, Arg-177, Asn-255, Thr-270, and Arg-334. Catalysis depends on His-74, which acts as the Proton donor. Residue 330–336 (VTTKRVR) coordinates substrate. Residues Arg-336, 362–364 (KLD), and 444–446 (GVG) contribute to the GTP site.

The protein belongs to the adenylosuccinate synthetase family. As to quaternary structure, homodimer. The cofactor is Mg(2+).

The protein resides in the cytoplasm. It catalyses the reaction IMP + L-aspartate + GTP = N(6)-(1,2-dicarboxyethyl)-AMP + GDP + phosphate + 2 H(+). It functions in the pathway purine metabolism; AMP biosynthesis via de novo pathway; AMP from IMP: step 1/2. Functionally, plays an important role in the de novo pathway and in the salvage pathway of purine nucleotide biosynthesis. Catalyzes the first committed step in the biosynthesis of AMP from IMP. This chain is Adenylosuccinate synthetase, found in Aedes aegypti (Yellowfever mosquito).